The following is a 319-amino-acid chain: 3-oxoacyl-[acyl-carrier-protein] reductase, chloroplastic (319 aa).

The N-terminal 57 residues, 1 to 57 (MAAAVAAPRLISLKAVAKLGFREISQIRQLAPLHSAIPHFGMLRCRSRQPFSTSVVK), are a transit peptide targeting the chloroplast. A58 is modified (N-acetylalanine). An NADP(+)-binding site is contributed by 81-105 (ITGASRGIGKAIALALGKAGCKVLV). S213 is a substrate binding site. The active-site Proton acceptor is Y226.

It belongs to the short-chain dehydrogenases/reductases (SDR) family. As to quaternary structure, homotetramer.

It localises to the plastid. The protein localises to the chloroplast. It carries out the reaction a (3R)-hydroxyacyl-[ACP] + NADP(+) = a 3-oxoacyl-[ACP] + NADPH + H(+). It functions in the pathway lipid metabolism; fatty acid biosynthesis. The sequence is that of 3-oxoacyl-[acyl-carrier-protein] reductase, chloroplastic from Arabidopsis thaliana (Mouse-ear cress).